Reading from the N-terminus, the 177-residue chain is Large ribosomal subunit protein uL6 (177 aa).

This sequence belongs to the universal ribosomal protein uL6 family. Part of the 50S ribosomal subunit.

In terms of biological role, this protein binds to the 23S rRNA, and is important in its secondary structure. It is located near the subunit interface in the base of the L7/L12 stalk, and near the tRNA binding site of the peptidyltransferase center. This is Large ribosomal subunit protein uL6 from Azoarcus sp. (strain BH72).